Consider the following 334-residue polypeptide: Ornithine carbamoyltransferase, catabolic (334 aa).

Carbamoyl phosphate-binding positions include 57–60, Gln84, Arg108, and 135–138; these read STRT and HPTQ. Residues Asn168, Asp232, and 236 to 237 each bind L-ornithine; that span reads SM. Carbamoyl phosphate-binding positions include 274 to 275 and Arg321; that span reads CL.

The protein belongs to the aspartate/ornithine carbamoyltransferase superfamily. OTCase family.

It is found in the cytoplasm. The catalysed reaction is carbamoyl phosphate + L-ornithine = L-citrulline + phosphate + H(+). Its pathway is amino-acid degradation; L-arginine degradation via ADI pathway; carbamoyl phosphate from L-arginine: step 2/2. Functionally, reversibly catalyzes the transfer of the carbamoyl group from carbamoyl phosphate (CP) to the N(epsilon) atom of ornithine (ORN) to produce L-citrulline. This Haemophilus influenzae (strain ATCC 51907 / DSM 11121 / KW20 / Rd) protein is Ornithine carbamoyltransferase, catabolic (arcB).